The chain runs to 444 residues: tRNA modification GTPase MnmE (444 aa).

(6S)-5-formyl-5,6,7,8-tetrahydrofolate is bound by residues Arg25, Glu83, and Lys122. In terms of domain architecture, TrmE-type G spans 218–370 (GFKVAIVGKP…IVGRLRDYLD (153 aa)). Residues 228 to 233 (NVGKSS), 247 to 253 (SDEAGTT), and 272 to 275 (DTAG) contribute to the GTP site. Mg(2+) is bound by residues Ser232 and Thr253. Lys444 contributes to the (6S)-5-formyl-5,6,7,8-tetrahydrofolate binding site.

It belongs to the TRAFAC class TrmE-Era-EngA-EngB-Septin-like GTPase superfamily. TrmE GTPase family. In terms of assembly, homodimer. Heterotetramer of two MnmE and two MnmG subunits. K(+) is required as a cofactor.

The protein localises to the cytoplasm. Exhibits a very high intrinsic GTPase hydrolysis rate. Involved in the addition of a carboxymethylaminomethyl (cmnm) group at the wobble position (U34) of certain tRNAs, forming tRNA-cmnm(5)s(2)U34. The sequence is that of tRNA modification GTPase MnmE from Campylobacter curvus (strain 525.92).